The chain runs to 128 residues: Small ribosomal subunit protein uS12 (128 aa).

Residue aspartate 89 is modified to 3-methylthioaspartic acid. Residues 101–128 form a disordered region; it reads SLDTSGVADRRNGRSKYGAKRPKEGAKK.

The protein belongs to the universal ribosomal protein uS12 family. In terms of assembly, part of the 30S ribosomal subunit. Contacts proteins S8 and S17. May interact with IF1 in the 30S initiation complex.

Functionally, with S4 and S5 plays an important role in translational accuracy. In terms of biological role, interacts with and stabilizes bases of the 16S rRNA that are involved in tRNA selection in the A site and with the mRNA backbone. Located at the interface of the 30S and 50S subunits, it traverses the body of the 30S subunit contacting proteins on the other side and probably holding the rRNA structure together. The combined cluster of proteins S8, S12 and S17 appears to hold together the shoulder and platform of the 30S subunit. This chain is Small ribosomal subunit protein uS12, found in Chloroherpeton thalassium (strain ATCC 35110 / GB-78).